Consider the following 132-residue polypeptide: Galectin-2 (132 aa).

Residues 4 to 131 enclose the Galectin domain; that stretch reads ELEVKNMDMK…GFNMSSFKLK (128 aa). 65-71 provides a ligand contact to a beta-D-galactoside; sequence WGQEQRE.

Homodimer.

Functionally, this protein binds beta-galactoside. Its physiological function is not yet known. This Homo sapiens (Human) protein is Galectin-2 (LGALS2).